Here is a 719-residue protein sequence, read N- to C-terminus: Transcription factor E4F1 (719 aa).

Residues 20–63 (NIITIQTTLGDEDEDIHKCGKCLAEFSALDAFIQHKLSRSCKRT) are required for ubiquitin ligase activity. The segment at 59–125 (SCKRTQDPQT…SEDESSSPSK (67 aa)) is disordered. The span at 98 to 109 (EKQDAKVASGDK) shows a compositional bias: basic and acidic residues. Residues 128–207 (WKLNTEGRYV…GLAFRESGAL (80 aa)) are mediates dimerization and DNA-binding. 2 consecutive C2H2-type zinc fingers follow at residues 136–158 (YVCD…MFTH) and 164–186 (FVCE…KRRH). The C2H2-type 3; degenerate zinc-finger motif lies at 192-216 (YRCNQCGLAFRESGALTRHLKSLTP). 5 C2H2-type zinc fingers span residues 365–387 (YKCP…VKGH), 393–415 (FKCL…METH), 421–443 (YKCG…MRAH), 449–471 (YHCS…HRTH), and 477–499 (YVCQ…IRHH). Residues 505–527 (FKCSKCGRGFAEHGTLNRHLRAK) form a C2H2-type 9; degenerate zinc finger.

The protein localises to the nucleus. It localises to the nucleoplasm. It is found in the cytoplasm. It catalyses the reaction S-ubiquitinyl-[E2 ubiquitin-conjugating enzyme]-L-cysteine + [acceptor protein]-L-lysine = [E2 ubiquitin-conjugating enzyme]-L-cysteine + N(6)-ubiquitinyl-[acceptor protein]-L-lysine.. It functions in the pathway protein modification; protein ubiquitination. May function as a transcriptional repressor. May also function as a ubiquitin ligase. Functions in cell survival and proliferation through control of the cell cycle. In Danio rerio (Zebrafish), this protein is Transcription factor E4F1 (e4f1).